The primary structure comprises 139 residues: ATP synthase epsilon chain (139 aa).

The protein belongs to the ATPase epsilon chain family. As to quaternary structure, F-type ATPases have 2 components, CF(1) - the catalytic core - and CF(0) - the membrane proton channel. CF(1) has five subunits: alpha(3), beta(3), gamma(1), delta(1), epsilon(1). CF(0) has three main subunits: a, b and c.

It is found in the cell membrane. Its function is as follows. Produces ATP from ADP in the presence of a proton gradient across the membrane. The polypeptide is ATP synthase epsilon chain (Ligilactobacillus salivarius (strain UCC118) (Lactobacillus salivarius)).